Here is an 876-residue protein sequence, read N- to C-terminus: Aspartate--tRNA(Asp/Asn) ligase (876 aa).

Residues 1–278 form a unknown region; the sequence is MAATDTPWRP…FGFKRAYEGF (278 aa). Residues 279 to 876 form an aspartyl-tRNA synthetase region; sequence MHVYRSHTCG…PKPKKEVKEG (598 aa). Glu453 provides a ligand contact to L-aspartate. Residues 477–480 form an aspartate region; the sequence is QQFK. Residues Arg499 and His729 each coordinate L-aspartate. An ATP-binding site is contributed by 499-501; sequence RDE. An ATP-binding site is contributed by Glu763. Arg770 lines the L-aspartate pocket. Residue 815 to 818 participates in ATP binding; that stretch reads GVDR.

Belongs to the class-II aminoacyl-tRNA synthetase family. Type 1 subfamily. Homodimer.

The protein localises to the cytoplasm. The enzyme catalyses tRNA(Asx) + L-aspartate + ATP = L-aspartyl-tRNA(Asx) + AMP + diphosphate. Functionally, aspartyl-tRNA synthetase with relaxed tRNA specificity since it is able to aspartylate not only its cognate tRNA(Asp) but also tRNA(Asn). Reaction proceeds in two steps: L-aspartate is first activated by ATP to form Asp-AMP and then transferred to the acceptor end of tRNA(Asp/Asn). In Paramagnetospirillum magneticum (strain ATCC 700264 / AMB-1) (Magnetospirillum magneticum), this protein is Aspartate--tRNA(Asp/Asn) ligase (aspS).